Consider the following 151-residue polypeptide: Flagellar assembly factor FliW (151 aa).

It belongs to the FliW family. As to quaternary structure, interacts with translational regulator CsrA and flagellin(s).

It localises to the cytoplasm. Acts as an anti-CsrA protein, binds CsrA and prevents it from repressing translation of its target genes, one of which is flagellin. Binds to flagellin and participates in the assembly of the flagellum. The protein is Flagellar assembly factor FliW of Halalkalibacterium halodurans (strain ATCC BAA-125 / DSM 18197 / FERM 7344 / JCM 9153 / C-125) (Bacillus halodurans).